A 400-amino-acid chain; its full sequence is Elongation factor Tu (400 aa).

Residues Lys10–Gln208 enclose the tr-type G domain. Positions Gly19–Thr26 are G1. Residue Gly19 to Thr26 coordinates GTP. Thr26 provides a ligand contact to Mg(2+). Positions Gly60–Asn64 are G2. The G3 stretch occupies residues Asp81–Gly84. Residues Asp81–His85 and Asn136–Asp139 each bind GTP. The interval Asn136–Asp139 is G4. Residues Ser174–Leu176 form a G5 region.

It belongs to the TRAFAC class translation factor GTPase superfamily. Classic translation factor GTPase family. EF-Tu/EF-1A subfamily. In terms of assembly, monomer.

Its subcellular location is the cytoplasm. It catalyses the reaction GTP + H2O = GDP + phosphate + H(+). Its function is as follows. GTP hydrolase that promotes the GTP-dependent binding of aminoacyl-tRNA to the A-site of ribosomes during protein biosynthesis. This Thermosipho africanus (strain TCF52B) protein is Elongation factor Tu.